The primary structure comprises 265 residues: Tryptophan synthase alpha chain (265 aa).

Active-site proton acceptor residues include Glu-49 and Glu-60.

Belongs to the TrpA family. As to quaternary structure, tetramer of two alpha and two beta chains.

It catalyses the reaction (1S,2R)-1-C-(indol-3-yl)glycerol 3-phosphate + L-serine = D-glyceraldehyde 3-phosphate + L-tryptophan + H2O. Its pathway is amino-acid biosynthesis; L-tryptophan biosynthesis; L-tryptophan from chorismate: step 5/5. Functionally, the alpha subunit is responsible for the aldol cleavage of indoleglycerol phosphate to indole and glyceraldehyde 3-phosphate. The chain is Tryptophan synthase alpha chain from Herminiimonas arsenicoxydans.